A 110-amino-acid chain; its full sequence is Small heat shock protein hspG11 (110 aa).

Residues 30–110 enclose the sHSP domain; it reads KTIIDILPPM…KSTSTSSTFR (81 aa). The disordered stretch occupies residues 78-110; the sequence is KDLNKQHNNNNNNNNNNNNLVIEKSTSTSSTFR. The segment covering 85–96 has biased composition (low complexity); sequence NNNNNNNNNNNN. Over residues 101–110 the composition is skewed to polar residues; the sequence is KSTSTSSTFR.

The protein belongs to the small heat shock protein (HSP20) family.

The polypeptide is Small heat shock protein hspG11 (hspG11) (Dictyostelium discoideum (Social amoeba)).